A 235-amino-acid chain; its full sequence is MKFGVLVFPGSNCDRDVVLVTRDLLKQPTRMVWHQETDISDLDVVVIPGGFSYGDYLRCGAISRFSPAMQATMAHAEQGKLVLGICNGFQVLTESGLLPGALVRNRDLHFICDRVPVRVERTNLPWTQAYQAGQVITLPIAHGEGCYYADPETLKQLQANQQILFRYCQPNGEITPDSNPNGSVENIAGICNRQGNVVGMMPHPERASDPTLGYTDGLLLFQGVLNSLMAQGVTA.

The 232-residue stretch at 3 to 234 folds into the Glutamine amidotransferase type-1 domain; it reads FGVLVFPGSN…LNSLMAQGVT (232 aa). Catalysis depends on cysteine 86, which acts as the Nucleophile. Active-site residues include histidine 203 and glutamate 205.

In terms of assembly, part of the FGAM synthase complex composed of 1 PurL, 1 PurQ and 2 PurS subunits.

It is found in the cytoplasm. It catalyses the reaction N(2)-formyl-N(1)-(5-phospho-beta-D-ribosyl)glycinamide + L-glutamine + ATP + H2O = 2-formamido-N(1)-(5-O-phospho-beta-D-ribosyl)acetamidine + L-glutamate + ADP + phosphate + H(+). The enzyme catalyses L-glutamine + H2O = L-glutamate + NH4(+). The protein operates within purine metabolism; IMP biosynthesis via de novo pathway; 5-amino-1-(5-phospho-D-ribosyl)imidazole from N(2)-formyl-N(1)-(5-phospho-D-ribosyl)glycinamide: step 1/2. In terms of biological role, part of the phosphoribosylformylglycinamidine synthase complex involved in the purines biosynthetic pathway. Catalyzes the ATP-dependent conversion of formylglycinamide ribonucleotide (FGAR) and glutamine to yield formylglycinamidine ribonucleotide (FGAM) and glutamate. The FGAM synthase complex is composed of three subunits. PurQ produces an ammonia molecule by converting glutamine to glutamate. PurL transfers the ammonia molecule to FGAR to form FGAM in an ATP-dependent manner. PurS interacts with PurQ and PurL and is thought to assist in the transfer of the ammonia molecule from PurQ to PurL. The polypeptide is Phosphoribosylformylglycinamidine synthase subunit PurQ (Acaryochloris marina (strain MBIC 11017)).